The primary structure comprises 232 residues: Large ribosomal subunit protein uL1 (232 aa).

The protein belongs to the universal ribosomal protein uL1 family. In terms of assembly, part of the 50S ribosomal subunit.

Functionally, binds directly to 23S rRNA. The L1 stalk is quite mobile in the ribosome, and is involved in E site tRNA release. Protein L1 is also a translational repressor protein, it controls the translation of the L11 operon by binding to its mRNA. This Parabacteroides distasonis (strain ATCC 8503 / DSM 20701 / CIP 104284 / JCM 5825 / NCTC 11152) protein is Large ribosomal subunit protein uL1.